Reading from the N-terminus, the 675-residue chain is Probable potassium transport system protein Kup (675 aa).

12 consecutive transmembrane segments (helical) span residues 12-32 (LGML…PLYV), 55-75 (VSLI…LVAL), 98-118 (WLIF…TLTP), 143-163 (WLVP…QVLG), 170-190 (SFGP…LLNI), 216-236 (MGIF…ALYS), 249-269 (TWPF…AWML), 296-316 (IAMI…LITG), 345-365 (IYIG…VWLF), 374-394 (AYGL…SQWV), 401-421 (FWSL…LVAS), and 428-448 (GGYL…VWFF).

It belongs to the HAK/KUP transporter (TC 2.A.72) family.

It localises to the cell membrane. It catalyses the reaction K(+)(in) + H(+)(in) = K(+)(out) + H(+)(out). Its function is as follows. Transport of potassium into the cell. Likely operates as a K(+):H(+) symporter. This chain is Probable potassium transport system protein Kup, found in Levilactobacillus brevis (strain ATCC 367 / BCRC 12310 / CIP 105137 / JCM 1170 / LMG 11437 / NCIMB 947 / NCTC 947) (Lactobacillus brevis).